The primary structure comprises 88 residues: Small ribosomal subunit protein uS15c (88 aa).

It belongs to the universal ribosomal protein uS15 family. As to quaternary structure, part of the 30S ribosomal subunit.

Its subcellular location is the plastid. The protein resides in the chloroplast. The polypeptide is Small ribosomal subunit protein uS15c (rps15) (Capsella bursa-pastoris (Shepherd's purse)).